Consider the following 213-residue polypeptide: Uridine kinase (213 aa).

Residue 15–22 (GASASGKS) coordinates ATP.

It belongs to the uridine kinase family.

The protein resides in the cytoplasm. It catalyses the reaction uridine + ATP = UMP + ADP + H(+). The enzyme catalyses cytidine + ATP = CMP + ADP + H(+). It functions in the pathway pyrimidine metabolism; CTP biosynthesis via salvage pathway; CTP from cytidine: step 1/3. The protein operates within pyrimidine metabolism; UMP biosynthesis via salvage pathway; UMP from uridine: step 1/1. This Klebsiella pneumoniae (strain 342) protein is Uridine kinase.